A 704-amino-acid polypeptide reads, in one-letter code: Arylphorin (704 aa).

An N-terminal signal peptide occupies residues Met1 to Ser16. N-linked (GlcNAc...) asparagine glycosylation is found at Asn73, Asn212, and Asn360.

It belongs to the hemocyanin family. In terms of assembly, homohexamer of two stacked trimers; disulfide-linked. Post-translationally, glycosylation at Asn-360 is required for proper folding.

The protein resides in the secreted. Its subcellular location is the extracellular space. Arylphorin is a larval storage protein (LSP) which may serve as a storage protein used primarily as a source of aromatic amino acids for protein synthesis during metamorphosis. It is a constituent of the sclerotizing system of the cuticle, and serves as a carrier for ecdysteroid hormone. The chain is Arylphorin from Antheraea pernyi (Chinese oak silk moth).